Consider the following 173-residue polypeptide: ATP synthase subunit b (173 aa).

Residues 12–34 traverse the membrane as a helical segment; that stretch reads AFGNLYAIGWSAVNFLVLLALMY.

It belongs to the ATPase B chain family. As to quaternary structure, F-type ATPases have 2 components, F(1) - the catalytic core - and F(0) - the membrane proton channel. F(1) has five subunits: alpha(3), beta(3), gamma(1), delta(1), epsilon(1). F(0) has three main subunits: a(1), b(2) and c(10-14). The alpha and beta chains form an alternating ring which encloses part of the gamma chain. F(1) is attached to F(0) by a central stalk formed by the gamma and epsilon chains, while a peripheral stalk is formed by the delta and b chains.

The protein localises to the cell membrane. Functionally, f(1)F(0) ATP synthase produces ATP from ADP in the presence of a proton or sodium gradient. F-type ATPases consist of two structural domains, F(1) containing the extramembraneous catalytic core and F(0) containing the membrane proton channel, linked together by a central stalk and a peripheral stalk. During catalysis, ATP synthesis in the catalytic domain of F(1) is coupled via a rotary mechanism of the central stalk subunits to proton translocation. Component of the F(0) channel, it forms part of the peripheral stalk, linking F(1) to F(0). The polypeptide is ATP synthase subunit b (Syntrophomonas wolfei subsp. wolfei (strain DSM 2245B / Goettingen)).